Reading from the N-terminus, the 811-residue chain is MTFLPLLFIFFFLTSIPFPAFSQYNDRSTLLNLKRDLGDPLSLRLWNDTSSPCNWPRITCTAGNVTEINFQNQNFTGTVPTTICNFPNLKSLNLSFNYFAGEFPTVLYNCTKLQYLDLSQNLFNGSLPDDINRLAPKLKYLDLAANSFAGDIPKNIGRISKLKVLNLYMSEYDGTFPSEIGDLSELEELQLALNDKFTPVKLPTEFGKLKKLKYMWLEEMNLIGEISAVVFENMTDLKHVDLSVNNLTGRIPDVLFGLKNLTELYLFANDLTGEIPKSISAKNLVHLDLSANNLNGSIPESIGNLTNLELLYLFVNELTGEIPRAIGKLPELKELKLFTNKLTGEIPAEIGFISKLERFEVSENQLTGKLPENLCHGGKLQSVIVYSNNLTGEIPESLGDCETLSSVLLQNNGFSGSVTISNNTRSNNNFTGKIPSFICELHSLILLDLSTNKFNGSIPRCIANLSTLEVLNLGKNHLSGSIPENISTSVKSIDIGHNQLAGKLPRSLVRISSLEVLNVESNKINDTFPFWLDSMQQLQVLVLRSNAFHGSINQNGFSKLRIIDISGNHFNGTLPLDFFVNWTAMFSLGKIEDQYMGTNYMRTNYYSDSIVVMIKGIALEMVRILNTFTTIDFSGNKFEGEIPRSVGLLKELHVLNLSNNGFTGHIPSSMGNLIELESLDVSQNKLSGEIPPELGKLSYLAYMNFSQNQFVGLVPGGTQFQTQPCSSFADNPRLFGLSLERVCVDIHKKTPQQSEMPEPEEDEEEVMNWTAAAIGSIPGISIGLTMGYILVSYKPEWLMNSGRNKRRIKPI.

The first 22 residues, 1 to 22 (MTFLPLLFIFFFLTSIPFPAFS), serve as a signal peptide directing secretion. Topologically, residues 23 to 770 (QYNDRSTLLN…EDEEEVMNWT (748 aa)) are extracellular. Residues asparagine 47, asparagine 64, asparagine 74, asparagine 93, asparagine 109, and asparagine 124 are each glycosylated (N-linked (GlcNAc...) asparagine). LRR repeat units follow at residues 62-86 (AGNV…ICNF), 87-110 (PNLK…LYNC), 112-134 (KLQY…INRL), 135-159 (APKL…IGRI), 161-183 (KLKV…IGDL), and 184-208 (SELE…EFGK). The stretch at 211 to 233 (KLKYMWLEEMNLIGEISAVVFEN) is one LRR 7; degenerate repeat. N-linked (GlcNAc...) asparagine glycosylation is found at asparagine 233, asparagine 246, asparagine 260, asparagine 295, and asparagine 304. LRR repeat units follow at residues 234–258 (MTDL…LFGL), 260–281 (NLTE…SISA), 282–305 (KNLV…IGNL), 307–329 (NLEL…IGKL), 330–354 (PELK…GFIS), 356–377 (LERF…LCHG), 379–401 (KLQS…LGDC), and 403–427 (TLSS…TRSN). N-linked (GlcNAc...) asparagine glycans are attached at residues asparagine 389, asparagine 422, asparagine 429, asparagine 455, asparagine 464, and asparagine 485. LRR repeat units lie at residues 441–465 (LHSL…IANL), 466–489 (STLE…ISTS), 491–511 (KSID…LVRI), 512–537 (SSLE…SMQQ), 539–557 (QVLV…QNGF), 558–581 (SKLR…FFVN), 625–649 (LNTF…VGLL), 650–673 (KELH…MGNL), 674–697 (IELE…LGKL), and 699–722 (YLAY…QFQT). N-linked (GlcNAc...) asparagine glycosylation is present at asparagine 525. N-linked (GlcNAc...) asparagine glycans are attached at residues asparagine 571 and asparagine 581. Asparagine 656 carries an N-linked (GlcNAc...) asparagine glycan. Asparagine 704 carries N-linked (GlcNAc...) asparagine glycosylation. Residues 771 to 791 (AAAIGSIPGISIGLTMGYILV) form a helical membrane-spanning segment. Residues 792–811 (SYKPEWLMNSGRNKRRIKPI) lie on the Cytoplasmic side of the membrane.

Belongs to the RLP family.

The protein resides in the cell membrane. Its function is as follows. Required for defense against powdery mildew pathogen. The polypeptide is Receptor-like protein 52 (Arabidopsis thaliana (Mouse-ear cress)).